We begin with the raw amino-acid sequence, 309 residues long: Calcium homeostasis modulator protein 5 (309 aa).

Topologically, residues 1-15 are cytoplasmic; sequence MDAFQSILKFFLNQK. The chain crosses the membrane as a helical span at residues 16 to 37; sequence TAIGYSFMALLTVGSERLFSLV. A 1,2-diacyl-sn-glycero-3-phosphate is bound by residues Arg-32 and Val-37. Residues 38–45 lie on the Extracellular side of the membrane; that stretch reads AFKCPCSV. Disulfide bonds link Cys-41/Cys-127, Cys-43/Cys-158, and Cys-142/Cys-149. A helical membrane pass occupies residues 46-70; the sequence is ENTAYGLVFLFAPAWVLLILGFFLN. At 71–99 the chain is on the cytoplasmic side; that stretch reads NKAWRLFTGCCMNPKKIFPRRRCCRFFYV. The chain crosses the membrane as a helical span at residues 100–129; the sequence is LGHIILSSLVAPVMWLSVALLNGTFYECAM. Residue Asn-121 participates in a 1,2-diacyl-sn-glycero-3-phosphate binding. Over 130–174 the chain is Extracellular; the sequence is SGTRSTRLLEMICKGKPKECWEELHKVSCGKSSMAAMESEEVRLS. Residues 175–200 form a helical membrane-spanning segment; the sequence is LQAQSQILGWCLICSASFLSLLTTCY. The Cytoplasmic portion of the chain corresponds to 201–309; it reads ARCRSKVSYL…MILVGTAQSL (109 aa). Position 202 (Arg-202) interacts with a 1,2-diacyl-sn-glycero-3-phosphate.

The protein belongs to the CALHM family. Oligomerizes to form undecameric cone-shaped channels.

It is found in the membrane. In terms of biological role, may assemble to form large pore channels with gating and ion conductance likely regulated by membrane lipids. In Mus musculus (Mouse), this protein is Calcium homeostasis modulator protein 5.